The sequence spans 417 residues: Dihydroorotase (417 aa).

Residues His-60 and His-62 each contribute to the Zn(2+) site. Residues 62 to 64 (HLR) and Asn-94 each bind substrate. Zn(2+) contacts are provided by Lys-138, His-167, His-207, and Asp-275. Lys-138 is modified (N6-carboxylysine). Residue Asp-275 is part of the active site. Substrate-binding positions include His-279 and 289–290 (AG).

This sequence belongs to the metallo-dependent hydrolases superfamily. DHOase family. Class I DHOase subfamily. The cofactor is Zn(2+).

The enzyme catalyses (S)-dihydroorotate + H2O = N-carbamoyl-L-aspartate + H(+). It functions in the pathway pyrimidine metabolism; UMP biosynthesis via de novo pathway; (S)-dihydroorotate from bicarbonate: step 3/3. Its function is as follows. Catalyzes the reversible cyclization of carbamoyl aspartate to dihydroorotate. In Pyrococcus horikoshii (strain ATCC 700860 / DSM 12428 / JCM 9974 / NBRC 100139 / OT-3), this protein is Dihydroorotase.